Here is a 210-residue protein sequence, read N- to C-terminus: Transcriptional regulator GfcR (210 aa).

Residues 39–60 form a disordered region; it reads VERSGAATEPEPRAEPEGPDDI. Residues 48–60 are compositionally biased toward basic and acidic residues; that stretch reads PEPRAEPEGPDDI.

The protein belongs to the purine/pyrimidine phosphoribosyltransferase family. GfcR subfamily.

Its activity is regulated as follows. Interaction with effectors modulates GfcR activity. 2-keto-3-deoxy-6-phosphogluconate (KDPG), fructose-1,6-bisphosphate (FBP), 2-keto-3-deoxy-6-phosphogalactonate (KDPGal) and glycerol-3-phosphate (G3P), which are intermediates of sugar and glycerol degradation pathways, can act as inducer molecules. Functionally, DNA-binding transcriptional regulator that functions as a regulator of central sugar catabolic pathways. Is both a local regulator of specific steps in the pathways for D-glucose and D-fructose degradation and a global regulator of hexose catabolism. In the presence of D-glucose, activates expression of the gene encoding the gluconate dehydratase (gad), which is involved in D-glucose catabolism via the semiphosphorylative Entner-Doudoroff (spED) pathway. In the presence of D-fructose, activates expression of the genes encoding the PTS system EIIC component (ptfC) and the fructose-1,6-bisphosphate aldolase (fba), which are involved in D-fructose uptake and degradation via the modified Embden-Meyerhof pathway. In addition, in the presence of D-glucose, D-fructose, D-galactose or glycerol, it activates expression of the genes encoding glyceraldehyde-3-phosphate dehydrogenase (gap) and pyruvate kinase (pykA), enzymes common to all four degradation pathways. Acts by binding directly to the promoter region of the regulated genes. In Haloferax volcanii (strain ATCC 29605 / DSM 3757 / JCM 8879 / NBRC 14742 / NCIMB 2012 / VKM B-1768 / DS2) (Halobacterium volcanii), this protein is Transcriptional regulator GfcR.